The chain runs to 356 residues: UDP-N-acetylglucosamine--N-acetylmuramyl-(pentapeptide) pyrophosphoryl-undecaprenol N-acetylglucosamine transferase (356 aa).

UDP-N-acetyl-alpha-D-glucosamine-binding residues include Arg-166, Ser-196, and Gln-290.

The protein belongs to the glycosyltransferase 28 family. MurG subfamily.

It localises to the cell membrane. The enzyme catalyses Mur2Ac(oyl-L-Ala-gamma-D-Glu-L-Lys-D-Ala-D-Ala)-di-trans,octa-cis-undecaprenyl diphosphate + UDP-N-acetyl-alpha-D-glucosamine = beta-D-GlcNAc-(1-&gt;4)-Mur2Ac(oyl-L-Ala-gamma-D-Glu-L-Lys-D-Ala-D-Ala)-di-trans,octa-cis-undecaprenyl diphosphate + UDP + H(+). It functions in the pathway cell wall biogenesis; peptidoglycan biosynthesis. Cell wall formation. Catalyzes the transfer of a GlcNAc subunit on undecaprenyl-pyrophosphoryl-MurNAc-pentapeptide (lipid intermediate I) to form undecaprenyl-pyrophosphoryl-MurNAc-(pentapeptide)GlcNAc (lipid intermediate II). This chain is UDP-N-acetylglucosamine--N-acetylmuramyl-(pentapeptide) pyrophosphoryl-undecaprenol N-acetylglucosamine transferase, found in Staphylococcus aureus (strain Mu3 / ATCC 700698).